Consider the following 320-residue polypeptide: Pyrroline-5-carboxylate reductase 2 (320 aa).

Serine 2 carries the N-acetylserine modification. NADP(+) is bound by residues 6-11 (IGAGQL) and serine 34. Positions 8, 10, 11, 34, 36, 56, 70, 71, and 97 each coordinate NADPH. Residues asparagine 56, 69 to 72 (AVKP), and 95 to 97 (CAA) contribute to the NADP(+) site. Residue glutamate 164 participates in L-proline binding. Residue asparagine 230 participates in NADPH binding. Residues alanine 237 and threonine 238 each coordinate L-proline. The span at 295–305 (PTVSTLTPSSP) shows a compositional bias: low complexity. Residues 295-320 (PTVSTLTPSSPGKLLTRSLALGGKKD) are disordered. Serine 304 carries the phosphoserine modification.

It belongs to the pyrroline-5-carboxylate reductase family. In terms of assembly, homodecamer; composed of 5 homodimers. Interacts with LTO1. In terms of tissue distribution, detected in erythrocytes (at protein level). Expressed in fetal brain.

It is found in the cytoplasm. The protein resides in the mitochondrion. The catalysed reaction is L-proline + NADP(+) = (S)-1-pyrroline-5-carboxylate + NADPH + 2 H(+). It catalyses the reaction L-proline + NAD(+) = (S)-1-pyrroline-5-carboxylate + NADH + 2 H(+). The protein operates within amino-acid biosynthesis; L-proline biosynthesis; L-proline from L-glutamate 5-semialdehyde: step 1/1. With respect to regulation, subject to competitive inhibition by NADP. Was reported not to be inhibited by proline. However other study demonstrated an inhibition by proline. In terms of biological role, oxidoreductase that catalyzes the last step in proline biosynthesis, which corresponds to the reduction of pyrroline-5-carboxylate to L-proline using NAD(P)H. At physiologic concentrations, has higher specific activity in the presence of NADH. Involved in cellular response to oxidative stress. In some cell types, such as erythrocytes, its primary function may be the generation of NADP(+). In Homo sapiens (Human), this protein is Pyrroline-5-carboxylate reductase 2.